Reading from the N-terminus, the 361-residue chain is NADP-dependent alcohol dehydrogenase 7 (361 aa).

A Zn(2+)-binding site is contributed by Cys46. Residues Gly47 and His51 each coordinate NADP(+). Zn(2+) contacts are provided by His68, Cys100, Cys103, Cys106, Cys114, and Cys164. NADP(+) is bound by residues Ile189, Gly191, Ile192, Ser211, Arg212, Lys216, Cys251, Ser253, Ser256, Ile276, Ser300, and Ile302. Ser316 is subject to Phosphoserine. Arg349 is an NADP(+) binding site.

The protein belongs to the zinc-containing alcohol dehydrogenase family. Homodimer. Zn(2+) serves as cofactor.

The catalysed reaction is a primary alcohol + NADP(+) = an aldehyde + NADPH + H(+). The enzyme catalyses (E)-cinnamyl alcohol + NADP(+) = (E)-cinnamaldehyde + NADPH + H(+). It catalyses the reaction 3-methylbutanol + NADP(+) = 3-methylbutanal + NADPH + H(+). NADP-dependent alcohol dehydrogenase with a broad substrate specificity. The oxidative reactions are more than 100 times less efficient than the corresponding reductions, suggesting that the enzyme acts as an aldehyde reductase, rather than as an alcohol dehydrogenase. This chain is NADP-dependent alcohol dehydrogenase 7 (ADH7), found in Saccharomyces cerevisiae (strain ATCC 204508 / S288c) (Baker's yeast).